Consider the following 305-residue polypeptide: Carbonic anhydrase 4 (305 aa).

An N-terminal signal peptide occupies residues 1–17; it reads MQLLLALLALAYVAPST. The Alpha-carbonic anhydrase domain occupies 20-278; the sequence is SGWCYEIQTK…LGKRQVFKSH (259 aa). Intrachain disulfides connect Cys23-Cys35 and Cys45-Cys222. His87 serves as the catalytic Proton donor/acceptor. 2 residues coordinate Zn(2+): His114 and His116. N-linked (GlcNAc...) asparagine glycosylation occurs at Asn123. His139 serves as a coordination point for Zn(2+). An N-linked (GlcNAc...) asparagine glycan is attached at Asn214. 218 to 219 serves as a coordination point for substrate; it reads TT. Ser277 carries the GPI-anchor amidated serine lipid modification. A propeptide spans 278–305 (removed in mature form); it reads HAPGQLLSLPLPTLLVPTLTCLVANFLQ.

Belongs to the alpha-carbonic anhydrase family. As to quaternary structure, interacts with SLC4A4. Zn(2+) is required as a cofactor.

Its subcellular location is the cell membrane. It carries out the reaction hydrogencarbonate + H(+) = CO2 + H2O. Inhibited by acetazolamide. Its function is as follows. Catalyzes the reversible hydration of carbon dioxide into bicarbonate and protons and thus is essential to maintaining intracellular and extracellular pH. May stimulate the sodium/bicarbonate transporter activity of SLC4A4 that acts in pH homeostasis. It is essential for acid overload removal from the retina and retina epithelium, and acid release in the choriocapillaris in the choroid. The polypeptide is Carbonic anhydrase 4 (Ca4) (Mus musculus (Mouse)).